Consider the following 727-residue polypeptide: Glucans biosynthesis glucosyltransferase H (727 aa).

The interval 17 to 41 (GSAMPNERPGPMEPQSLSQMPEGFP) is disordered. A run of 6 helical transmembrane segments spans residues 58 to 80 (FFVVGGALLLSSFAIYEMGAVFS), 95 to 117 (FAINFCWIALAFCSGIAGFLLLL), 407 to 429 (GIMAYLSSPFWLLLILTGLMLAL), 457 to 479 (ALRLFYITMVVLFGPKIFGVLLL), 499 to 521 (VLFEVILSALIAPIMMFIHCGAV), and 572 to 594 (LLAWMSPALIGLWLAVPISAWTG).

This sequence belongs to the glycosyltransferase 2 family. OpgH subfamily.

It localises to the cell inner membrane. Its pathway is glycan metabolism; osmoregulated periplasmic glucan (OPG) biosynthesis. Functionally, involved in the biosynthesis of osmoregulated periplasmic glucans (OPGs). In Shewanella oneidensis (strain ATCC 700550 / JCM 31522 / CIP 106686 / LMG 19005 / NCIMB 14063 / MR-1), this protein is Glucans biosynthesis glucosyltransferase H.